We begin with the raw amino-acid sequence, 309 residues long: UPF0276 protein RB0508 (309 aa).

It belongs to the UPF0276 family.

In Rhizobium meliloti (strain 1021) (Ensifer meliloti), this protein is UPF0276 protein RB0508.